Reading from the N-terminus, the 662-residue chain is MKTSLLADPLFFTTPQLARFRFAFKLTFAVVLSLFLGFHLQLGTPNTAVMTAAIVAGGPAFVAGGEPFSGAIRHRGMLRIVGTFIGCIGALAIIISTIRAPIVMMLLCCIWAGLCNWISSLVKIENSYIFGLAGYTTLIIILATQGTPMLTPQFAVERCSEIVLGIACVIFADLLFAPRSIKQDVDRSLRELMVGQYRLLQLSMSGADEGTIDTTWHALVRKTTALDGMRSNLMMESSRWQNSNRRLTSLHTQSLTMITQACETYLTLQDVPTHVKSSLKQVLDPPVESFGDVHHHVKALRHLIAADSRDVPPTLVSWVGAATRYLLLVKGVQTNGRISKIEADVLNHDVEIKVPSAETHHAMINGLRTGVATALGCLFWLSTGWSSGGICMMMIAVVTSLAMRLPNPKMVGMDFLYGTIYSLPLGALMFMFILPSTQQSILLLCLSLGAMTFFLGVEVQKRRLGSLGALISTINVLLLNNPMTFNISLFLDNAIGQIIGCFVALMVILLIRDNTKSHTGRTLLNRFVYGAVSALTTDTTRRKENHLPALYQQLFLLLNRFPDDMAKYRLALWMIIMHQRLRTLDIPQNAALSAFHRQIRATAEQVILARRDTTRSRYFTQLLEELERYQQILTEQQLPPNVTVPVGRLTGILRDYQHALSD.

The next 11 helical transmembrane spans lie at 22–42 (FAFK…HLQL), 52–72 (AAIV…SGAI), 78–98 (LRIV…ISTI), 102–122 (IVMM…SSLV), 129–149 (IFGL…GTPM), 161–181 (EIVL…PRSI), 378–398 (LFWL…IAVV), 415–435 (FLYG…FILP), 439–459 (QSIL…GVEV), 467–487 (LGAL…TFNI), and 491–511 (LDNA…ILLI).

The protein belongs to the aromatic acid exporter ArAE (TC 2.A.85) family.

It localises to the cell inner membrane. In terms of biological role, forms an efflux pump with AaeA. Could function as a metabolic relief valve, allowing to eliminate certain compounds when they accumulate to high levels in the cell. This is p-hydroxybenzoic acid efflux pump subunit AaeB from Pectobacterium parmentieri (strain WPP163) (Pectobacterium wasabiae (strain WPP163)).